Consider the following 257-residue polypeptide: Adenosylcobinamide-GDP ribazoletransferase (257 aa).

6 consecutive transmembrane segments (helical) span residues 7–27, 39–59, 61–81, 113–133, 143–163, and 196–216; these read QLTL…PTWV, RYFG…YEIT, GFLP…VVTG, IGTY…ILLS, VVTA…SLIF, and VLVL…GLVL.

The protein belongs to the CobS family. Requires Mg(2+) as cofactor.

The protein localises to the cell inner membrane. It catalyses the reaction alpha-ribazole + adenosylcob(III)inamide-GDP = adenosylcob(III)alamin + GMP + H(+). The enzyme catalyses alpha-ribazole 5'-phosphate + adenosylcob(III)inamide-GDP = adenosylcob(III)alamin 5'-phosphate + GMP + H(+). It functions in the pathway cofactor biosynthesis; adenosylcobalamin biosynthesis; adenosylcobalamin from cob(II)yrinate a,c-diamide: step 7/7. In terms of biological role, joins adenosylcobinamide-GDP and alpha-ribazole to generate adenosylcobalamin (Ado-cobalamin). Also synthesizes adenosylcobalamin 5'-phosphate from adenosylcobinamide-GDP and alpha-ribazole 5'-phosphate. This is Adenosylcobinamide-GDP ribazoletransferase from Shewanella woodyi (strain ATCC 51908 / MS32).